The primary structure comprises 343 residues: NADH-ubiquinone oxidoreductase chain 2 (343 aa).

8 helical membrane-spanning segments follow: residues 1 to 21, 59 to 81, 96 to 116, 150 to 170, 178 to 198, 200 to 220, 241 to 261, and 270 to 290; these read MNPMSWLIITTSIALSTTMIT, YYLIQTMASTSMLFAATTNALNT, TIITLALMMKMAAAPFHSWLP, NITLILLSAMLSITMGGLGSL, LMAFSSIAHTGWIMATITMAP, ISTLTFTIYIMTTIPTFLLIN, MTILSMTILSMGGLPPLSGFM, and LISMNMITEATLMAMASLLSL.

Belongs to the complex I subunit 2 family.

Its subcellular location is the mitochondrion inner membrane. It carries out the reaction a ubiquinone + NADH + 5 H(+)(in) = a ubiquinol + NAD(+) + 4 H(+)(out). Its function is as follows. Core subunit of the mitochondrial membrane respiratory chain NADH dehydrogenase (Complex I) that is believed to belong to the minimal assembly required for catalysis. Complex I functions in the transfer of electrons from NADH to the respiratory chain. The immediate electron acceptor for the enzyme is believed to be ubiquinone. This is NADH-ubiquinone oxidoreductase chain 2 (MT-ND2) from Lycodon semicarinatus (Ryukyu odd-tooth snake).